Here is a 314-residue protein sequence, read N- to C-terminus: 1D-myo-inositol 2-acetamido-2-deoxy-alpha-D-glucopyranoside deacetylase 2 (314 aa).

Zn(2+) is bound by residues H25, D28, and H161.

Belongs to the MshB deacetylase family. It depends on Zn(2+) as a cofactor.

The catalysed reaction is 1D-myo-inositol 2-acetamido-2-deoxy-alpha-D-glucopyranoside + H2O = 1D-myo-inositol 2-amino-2-deoxy-alpha-D-glucopyranoside + acetate. Functionally, catalyzes the deacetylation of 1D-myo-inositol 2-acetamido-2-deoxy-alpha-D-glucopyranoside (GlcNAc-Ins) in the mycothiol biosynthesis pathway. The chain is 1D-myo-inositol 2-acetamido-2-deoxy-alpha-D-glucopyranoside deacetylase 2 from Frankia casuarinae (strain DSM 45818 / CECT 9043 / HFP020203 / CcI3).